A 1334-amino-acid polypeptide reads, in one-letter code: Aldehyde oxidase 3 (1334 aa).

Residues D8–I95 form the 2Fe-2S ferredoxin-type domain. [2Fe-2S] cluster-binding residues include C47, C52, C55, and C77. Q116 serves as a coordination point for Mo-molybdopterin. [2Fe-2S] cluster-binding residues include C117, C120, C152, and C154. The 186-residue stretch at F236–K421 folds into the FAD-binding PCMH-type domain. L264–L271 serves as a coordination point for FAD. At S320 the chain carries Phosphoserine. Residues S354, H358, D367, and L411 each contribute to the FAD site. Residues G801, L1042, and Q1198 each contribute to the Mo-molybdopterin site. E1265 functions as the Proton acceptor; for azaheterocycle hydroxylase activity in the catalytic mechanism.

Belongs to the xanthine dehydrogenase family. As to quaternary structure, homodimer. Requires [2Fe-2S] cluster as cofactor. FAD serves as cofactor. Mo-molybdopterin is required as a cofactor.

Its subcellular location is the cytoplasm. It catalyses the reaction an aldehyde + O2 + H2O = a carboxylate + H2O2 + H(+). Oxidase with broad substrate specificity, oxidizing aromatic azaheterocycles, such as N1-methylnicotinamide and phthalazine, as well as aldehydes, such as benzaldehyde, retinal and pyridoxal. Plays a key role in the metabolism of xenobiotics and drugs containing aromatic azaheterocyclic substituents. Is probably involved in the regulation of reactive oxygen species homeostasis. Is a prominent source of superoxide generation via the one-electron reduction of molecular oxygen. Also catalyzes nitric oxide (NO) production; under anaerobic conditions, reduces nitrite to NO with NADH or aldehyde as electron donor, but under aerobic conditions, NADH is the preferred substrate. These reactions may be catalyzed by several isozymes. The chain is Aldehyde oxidase 3 (Aox3) from Rattus norvegicus (Rat).